A 603-amino-acid chain; its full sequence is Arginine--tRNA ligase (603 aa).

The 'HIGH' region motif lies at 143 to 153 (PNIAKEMHVGH).

Belongs to the class-I aminoacyl-tRNA synthetase family. In terms of assembly, monomer.

The protein resides in the cytoplasm. It catalyses the reaction tRNA(Arg) + L-arginine + ATP = L-arginyl-tRNA(Arg) + AMP + diphosphate. The sequence is that of Arginine--tRNA ligase from Prochlorococcus marinus (strain SARG / CCMP1375 / SS120).